The following is a 292-amino-acid chain: ATP synthase gamma chain (292 aa).

The protein belongs to the ATPase gamma chain family. In terms of assembly, F-type ATPases have 2 components, CF(1) - the catalytic core - and CF(0) - the membrane proton channel. CF(1) has five subunits: alpha(3), beta(3), gamma(1), delta(1), epsilon(1). CF(0) has three main subunits: a, b and c.

Its subcellular location is the cell inner membrane. Functionally, produces ATP from ADP in the presence of a proton gradient across the membrane. The gamma chain is believed to be important in regulating ATPase activity and the flow of protons through the CF(0) complex. This is ATP synthase gamma chain from Chlorobaculum parvum (strain DSM 263 / NCIMB 8327) (Chlorobium vibrioforme subsp. thiosulfatophilum).